The sequence spans 149 residues: Calmodulin-1 (149 aa).

An N-acetylalanine modification is found at Ala2. 4 EF-hand domains span residues 8–43 (EQIA…LGQN), 44–79 (PTEA…KMKD), 81–116 (DSEE…LGEK), and 117–149 (LTDE…MTAK). Residue Asp21 coordinates Ca(2+). Lys22 bears the N6-acetyllysine; alternate mark. A Glycyl lysine isopeptide (Lys-Gly) (interchain with G-Cter in SUMO2); alternate cross-link involves residue Lys22. A Glycyl lysine isopeptide (Lys-Gly) (interchain with G-Cter in ubiquitin); alternate cross-link involves residue Lys22. Ca(2+) is bound by residues Asp23, Asp25, Thr27, and Glu32. A Phosphothreonine; by CaMK4 modification is found at Thr45. Positions 57, 59, 61, 63, and 68 each coordinate Ca(2+). The interval 77–149 (MKDTDSEEEI…EEFVQMMTAK (73 aa)) is necessary and sufficient for interaction with PCP4. Position 82 is a phosphoserine (Ser82). Ca(2+) is bound at residue Asp94. Residue Lys95 is modified to N6-acetyllysine. Ca(2+)-binding residues include Asp96, Asn98, and Tyr100. Position 100 is a phosphotyrosine (Tyr100). Ser102 bears the Phosphoserine mark. Residue Glu105 coordinates Ca(2+). Phosphothreonine is present on Thr111. Lys116 carries the N6,N6,N6-trimethyllysine; alternate modification. At Lys116 the chain carries N6-methyllysine; alternate. Residues Asp130, Asp132, Asp134, and Gln136 each contribute to the Ca(2+) site. Tyr139 carries the phosphotyrosine modification. Glu141 serves as a coordination point for Ca(2+).

The protein belongs to the calmodulin family. In terms of assembly, homotetramer. Interacts with MYO1C, MYO5A and RRAD. Interacts with MYO10. Interacts with CEP97, CCP110, TTN/titin and SRY. Interacts with USP6; the interaction is calcium dependent. Interacts with CDK5RAP2. Interacts with SCN5A. Interacts with RYR1. Interacts with FCHO1. Interacts with MIP in a 1:2 stoichiometry; the interaction with the cytoplasmic domains from two MIP subunits promotes MIP water channel closure. Interacts with ORAI1; this may play a role in the regulation of ORAI1-mediated calcium transport. Interacts with IQCF1. Interacts with SYT7. Interacts with CEACAM1 (via cytoplasmic domain); this interaction is in a calcium dependent manner and reduces homophilic cell adhesion through dissociation of dimer. Interacts with RYR2; regulates RYR2 calcium-release channel activity. Interacts with PCP4; regulates calmodulin calcium-binding. Interacts with the heterotetrameric KCNQ2 and KCNQ3 channel; the interaction is calcium-independent, constitutive and participates in the proper assembly of a functional heterotetrameric M channel. Interacts with alpha-synuclein/SNCA. Interacts with SLC9A1 in a calcium-dependent manner. In the absence of Ca(+2), interacts with GIMAP4 (via IQ domain). Interacts with SCN8A; the interaction modulates the inactivation rate of SCN8A. Interaction with KIF1A; the interaction is increased in presence of calcium and increases neuronal dense core vesicles motility. Interacts with KCNN3. Interacts with KCNQ1 (via C-terminus); forms a heterooctameric structure (with 4:4 KCNQ1:CALM stoichiometry) in a calcium-independent manner. Interacts with PIK3C3; the interaction modulates PIK3C3 kinase activity. Interacts with HINT1; interaction increases in the presence of calcium ions. Interacts with HINT3. Interacts with GARIN2; in mature sperm flagella. Interacts with IQUB. Interacts with SLC26A5 (via STAS domain); this interaction is calcium-dependent and the STAS domain interacts with only one lobe of CALM which is an elongated conformation. Ca(2+)-bound CALM1 binds CNGA1:CNGB1 channel (via CaM1 and CaM2 regions); this interaction modulates the affinity of the channel for cNMPs in response to intracellular Ca(2+) levels. Interacts with ITPR1; this interaction inhibits inositol 1,4,5 trisphosphate binding in both the presence and absence of calcium and 1,4,5 trisphosphate-induced calcium release in the presence of calcium. Component of the SIFI complex. Interacts with KCNN4; this interaction allows channel opening. Interacts with KCNN2; this interaction regulates the channel activity through calcium-binding. As to quaternary structure, (Microbial infection) Interacts with Rubella virus protease/methyltransferase p150. (Microbial infection) Interacts with Legionella pneumophila glutamylase SidJ. In terms of assembly, (Microbial infection) Interacts with C.violaceum CopC. C.violaceum CopC interacts specifically with the apo form of calmodulin. As to quaternary structure, (Microbial infection) Interacts with S.flexneri OspC1 and OspC3. S.flexneri OspC1 and OspC3 interact specifically with the apo form of calmodulin and prevents calcium-binding. Ubiquitination results in a strongly decreased activity. In terms of processing, phosphorylation results in a decreased activity.

The protein resides in the cytoplasm. It is found in the cytoskeleton. It localises to the spindle. The protein localises to the spindle pole. Its subcellular location is the microtubule organizing center. The protein resides in the centrosome. It is found in the cell projection. It localises to the cilium. The protein localises to the flagellum. Its activity is regulated as follows. (Microbial infection) Inactivated by S.flexneri OspC1 and OspC3 proteins, which specifically bind the apo-form of calmodulin, thereby preventing calcium-binding and activity. Its function is as follows. Calmodulin acts as part of a calcium signal transduction pathway by mediating the control of a large number of enzymes, ion channels, aquaporins and other proteins through calcium-binding. Calcium-binding is required for the activation of calmodulin. Among the enzymes to be stimulated by the calmodulin-calcium complex are a number of protein kinases, such as myosin light-chain kinases and calmodulin-dependent protein kinase type II (CaMK2), and phosphatases. Together with CCP110 and centrin, is involved in a genetic pathway that regulates the centrosome cycle and progression through cytokinesis. Is a regulator of voltage-dependent L-type calcium channels. Mediates calcium-dependent inactivation of CACNA1C. Positively regulates calcium-activated potassium channel activity of KCNN2. Forms a potassium channel complex with KCNQ1 and regulates electrophysiological activity of the channel via calcium-binding. Acts as a sensor to modulate the endoplasmic reticulum contacts with other organelles mediated by VMP1:ATP2A2. Functionally, (Microbial infection) Required for Legionella pneumophila SidJ glutamylase activity. In terms of biological role, (Microbial infection) Required for C.violaceum CopC and S.flexneri OspC3 arginine ADP-riboxanase activity. The protein is Calmodulin-1 of Homo sapiens (Human).